An 85-amino-acid polypeptide reads, in one-letter code: MHHRDLLAIIIISALLFINVILWGFILRKYLEQKEQDRKEREILERLRRIREIRDDSDYESNGEEEQEVMDLVLSHGFDNPMFEP.

Over 1-7 (MHHRDLL) the chain is Extracellular. The chain crosses the membrane as a helical span at residues 8–28 (AIIIISALLFINVILWGFILR). Over 29–85 (KYLEQKEQDRKEREILERLRRIREIRDDSDYESNGEEEQEVMDLVLSHGFDNPMFEP) the chain is Cytoplasmic.

The protein belongs to the HIV-1 VPU protein family. Homopentamer. Interacts with host CD4 and BRTC; these interactions induce proteasomal degradation of CD4. Interacts with host BST2; this interaction leads to the degradation of host BST2. Interacts with host FBXW11. Interacts with host AP1M1; this interaction plays a role in the mistrafficking and subsequent degradation of host BST2. Interacts with host RANBP2; this interaction allows Vpu to down-regulate host BLM sumoylation. Phosphorylated by host CK2. This phosphorylation is necessary for interaction with human BTRC and degradation of CD4.

It is found in the host membrane. Ion channel activity is inhibited by hexamethylene amiloride in vitro. In terms of biological role, enhances virion budding by targeting host CD4 and Tetherin/BST2 to proteasome degradation. Degradation of CD4 prevents any unwanted premature interactions between viral Env and its host receptor CD4 in the endoplasmic reticulum. Degradation of antiretroviral protein Tetherin/BST2 is important for virion budding, as BST2 tethers new viral particles to the host cell membrane. Mechanistically, Vpu bridges either CD4 or BST2 to BTRC, a substrate recognition subunit of the Skp1/Cullin/F-box protein E3 ubiquitin ligase, induces their ubiquitination and subsequent proteasomal degradation. The alteration of the E3 ligase specificity by Vpu seems to promote the degradation of host IKBKB, leading to NF-kappa-B down-regulation and subsequent apoptosis. Acts as a viroporin that forms an oligomeric ion channel in membranes. Modulates the host DNA repair mechanisms to promote degradation of nuclear viral cDNA in cells that are already productively infected in order to suppress immune sensing and proviral hyper-integration (superinfection). Manipulates PML-NBs and modulates SUMOylation of host BLM protein thereby enhancing its DNA-end processing activity toward viral unintegrated linear DNA. Also inhibits RAD52-mediated homologous repair of viral cDNA, preventing the generation of dead-end circular forms of single copies of the long terminal repeat and permitting sustained nucleolytic attack. The sequence is that of Protein Vpu from Human immunodeficiency virus type 1 group O (isolate ANT70) (HIV-1).